A 352-amino-acid chain; its full sequence is RNA 3'-terminal phosphate cyclase (352 aa).

ATP-binding positions include glutamine 102 and 292–296 (HMGDQ). Histidine 318 (tele-AMP-histidine intermediate) is an active-site residue.

It belongs to the RNA 3'-terminal cyclase family. Type 1 subfamily.

The protein localises to the cytoplasm. The catalysed reaction is a 3'-end 3'-phospho-ribonucleotide-RNA + ATP = a 3'-end 2',3'-cyclophospho-ribonucleotide-RNA + AMP + diphosphate. Its function is as follows. Catalyzes the conversion of 3'-phosphate to a 2',3'-cyclic phosphodiester at the end of RNA. The mechanism of action of the enzyme occurs in 3 steps: (A) adenylation of the enzyme by ATP; (B) transfer of adenylate to an RNA-N3'P to produce RNA-N3'PP5'A; (C) and attack of the adjacent 2'-hydroxyl on the 3'-phosphorus in the diester linkage to produce the cyclic end product. The biological role of this enzyme is unknown but it is likely to function in some aspects of cellular RNA processing. This chain is RNA 3'-terminal phosphate cyclase, found in Methanopyrus kandleri (strain AV19 / DSM 6324 / JCM 9639 / NBRC 100938).